The primary structure comprises 305 residues: 4-hydroxy-tetrahydrodipicolinate synthase 1 (305 aa).

A pyruvate-binding site is contributed by T53. Y141 (proton donor/acceptor) is an active-site residue. The active-site Schiff-base intermediate with substrate is the K169. V209 lines the pyruvate pocket.

Belongs to the DapA family. Homotetramer; dimer of dimers.

The protein localises to the cytoplasm. It carries out the reaction L-aspartate 4-semialdehyde + pyruvate = (2S,4S)-4-hydroxy-2,3,4,5-tetrahydrodipicolinate + H2O + H(+). It participates in amino-acid biosynthesis; L-lysine biosynthesis via DAP pathway; (S)-tetrahydrodipicolinate from L-aspartate: step 3/4. Catalyzes the condensation of (S)-aspartate-beta-semialdehyde [(S)-ASA] and pyruvate to 4-hydroxy-tetrahydrodipicolinate (HTPA). In Streptomyces coelicolor (strain ATCC BAA-471 / A3(2) / M145), this protein is 4-hydroxy-tetrahydrodipicolinate synthase 1.